Consider the following 285-residue polypeptide: Diaminopimelate epimerase 2 (285 aa).

Residues Asn-11, Asn-63, 73 to 74, Asn-158, Asn-191, 209 to 210, and 219 to 220 contribute to the substrate site; these read GN, ER, and GS.

It belongs to the diaminopimelate epimerase family. In terms of assembly, homodimer.

It is found in the cytoplasm. It carries out the reaction (2S,6S)-2,6-diaminopimelate = meso-2,6-diaminopimelate. It participates in amino-acid biosynthesis; L-lysine biosynthesis via DAP pathway; DL-2,6-diaminopimelate from LL-2,6-diaminopimelate: step 1/1. Functionally, catalyzes the stereoinversion of LL-2,6-diaminopimelate (L,L-DAP) to meso-diaminopimelate (meso-DAP), a precursor of L-lysine and an essential component of the bacterial peptidoglycan. This is Diaminopimelate epimerase 2 from Nostoc sp. (strain PCC 7120 / SAG 25.82 / UTEX 2576).